A 198-amino-acid polypeptide reads, in one-letter code: NADH-quinone oxidoreductase subunit C (198 aa).

The protein belongs to the complex I 30 kDa subunit family. NDH-1 is composed of 14 different subunits. Subunits NuoB, C, D, E, F, and G constitute the peripheral sector of the complex.

The protein localises to the cell inner membrane. It carries out the reaction a quinone + NADH + 5 H(+)(in) = a quinol + NAD(+) + 4 H(+)(out). Its function is as follows. NDH-1 shuttles electrons from NADH, via FMN and iron-sulfur (Fe-S) centers, to quinones in the respiratory chain. The immediate electron acceptor for the enzyme in this species is believed to be ubiquinone. Couples the redox reaction to proton translocation (for every two electrons transferred, four hydrogen ions are translocated across the cytoplasmic membrane), and thus conserves the redox energy in a proton gradient. The polypeptide is NADH-quinone oxidoreductase subunit C (Herminiimonas arsenicoxydans).